The primary structure comprises 345 residues: Tropomodulin-4 (345 aa).

The tract at residues 42 to 63 is disordered; it reads NMLLPAGLRQRDQTKKSPTGPL.

Belongs to the tropomodulin family. In terms of assembly, binds to the N-terminus of tropomyosin and to actin.

It is found in the cytoplasm. Its subcellular location is the cytoskeleton. In terms of biological role, blocks the elongation and depolymerization of the actin filaments at the pointed end. The Tmod/TM complex contributes to the formation of the short actin protofilament, which in turn defines the geometry of the membrane skeleton. This is Tropomodulin-4 (TMOD4) from Bos taurus (Bovine).